We begin with the raw amino-acid sequence, 574 residues long: Proline--tRNA ligase (574 aa).

Belongs to the class-II aminoacyl-tRNA synthetase family. ProS type 1 subfamily. In terms of assembly, homodimer.

The protein resides in the cytoplasm. The enzyme catalyses tRNA(Pro) + L-proline + ATP = L-prolyl-tRNA(Pro) + AMP + diphosphate. Catalyzes the attachment of proline to tRNA(Pro) in a two-step reaction: proline is first activated by ATP to form Pro-AMP and then transferred to the acceptor end of tRNA(Pro). As ProRS can inadvertently accommodate and process non-cognate amino acids such as alanine and cysteine, to avoid such errors it has two additional distinct editing activities against alanine. One activity is designated as 'pretransfer' editing and involves the tRNA(Pro)-independent hydrolysis of activated Ala-AMP. The other activity is designated 'posttransfer' editing and involves deacylation of mischarged Ala-tRNA(Pro). The misacylated Cys-tRNA(Pro) is not edited by ProRS. The polypeptide is Proline--tRNA ligase (Desulfovibrio desulfuricans (strain ATCC 27774 / DSM 6949 / MB)).